The chain runs to 147 residues: MVVVGKTSAIAAGVCGALFLGYCIYFDRKRRSDPNFKNRLREKRRKQKIAKERAGQSRLPDLKDAEAVQKFFLEEIQLGEELLAQGDFEKGVDHLTNAIAICGQPQQLLQVLQQTLPPPVFQMLLTKLPTINQRIGNAQNLAEDDVE.

The Mitochondrial intermembrane segment spans residues 1 to 3; the sequence is MVV. Residues 4-26 form a helical membrane-spanning segment; sequence VGKTSAIAAGVCGALFLGYCIYF. Residues 27–147 are Cytoplasmic-facing; sequence DRKRRSDPNF…AQNLAEDDVE (121 aa).

Belongs to the Tom20 family. In terms of assembly, forms part of the preprotein translocase complex of the outer mitochondrial membrane (TOM complex). Interacts with tom22.

It is found in the mitochondrion outer membrane. Its function is as follows. Central component of the receptor complex responsible for the recognition and translocation of cytosolically synthesized mitochondrial preproteins. Together with tom22 functions as the transit peptide receptor at the surface of the mitochondrion outer membrane and facilitates the movement of preproteins into the tom40 translocation pore. This Xenopus tropicalis (Western clawed frog) protein is Mitochondrial import receptor subunit TOM20 homolog (tomm20).